Consider the following 335-residue polypeptide: Phosphatidylglycerol--prolipoprotein diacylglyceryl transferase (335 aa).

The next 3 membrane-spanning stretches (helical) occupy residues 31–51 (IYWY…TYSL), 67–87 (YIFL…LAIG), and 100–120 (LAIQ…FPLI). R163 is an a 1,2-diacyl-sn-glycero-3-phospho-(1'-sn-glycerol) binding site. 3 helical membrane passes run 213-233 (PLFL…YFGL), 235-255 (YIKQ…YGVT), and 277-297 (SLLL…APLL).

The protein belongs to the Lgt family.

It is found in the cell membrane. It carries out the reaction L-cysteinyl-[prolipoprotein] + a 1,2-diacyl-sn-glycero-3-phospho-(1'-sn-glycerol) = an S-1,2-diacyl-sn-glyceryl-L-cysteinyl-[prolipoprotein] + sn-glycerol 1-phosphate + H(+). It functions in the pathway protein modification; lipoprotein biosynthesis (diacylglyceryl transfer). Its function is as follows. Catalyzes the transfer of the diacylglyceryl group from phosphatidylglycerol to the sulfhydryl group of the N-terminal cysteine of a prolipoprotein, the first step in the formation of mature lipoproteins. This Ureaplasma parvum serovar 3 (strain ATCC 27815 / 27 / NCTC 11736) protein is Phosphatidylglycerol--prolipoprotein diacylglyceryl transferase.